Here is a 190-residue protein sequence, read N- to C-terminus: Inner membrane-spanning protein YciB (190 aa).

A run of 6 helical transmembrane segments spans residues 3–23, 24–44, 49–69, 76–96, 121–141, and 149–169; these read FLFD…AGIY, VATT…WFKH, AMQW…LIFH, WKPT…VVVV, LVWA…AYNF, and FKLF…SVWL.

It belongs to the YciB family.

The protein resides in the cell inner membrane. In terms of biological role, plays a role in cell envelope biogenesis, maintenance of cell envelope integrity and membrane homeostasis. The polypeptide is Inner membrane-spanning protein YciB (Ralstonia pickettii (strain 12J)).